A 303-amino-acid chain; its full sequence is Aspartate carbamoyltransferase catalytic subunit (303 aa).

Residues R49 and T50 each coordinate carbamoyl phosphate. K77 provides a ligand contact to L-aspartate. 3 residues coordinate carbamoyl phosphate: R99, H126, and Q129. Positions 159 and 211 each coordinate L-aspartate. Carbamoyl phosphate contacts are provided by S252 and P253.

This sequence belongs to the aspartate/ornithine carbamoyltransferase superfamily. ATCase family. Heterododecamer (2C3:3R2) of six catalytic PyrB chains organized as two trimers (C3), and six regulatory PyrI chains organized as three dimers (R2).

The catalysed reaction is carbamoyl phosphate + L-aspartate = N-carbamoyl-L-aspartate + phosphate + H(+). It participates in pyrimidine metabolism; UMP biosynthesis via de novo pathway; (S)-dihydroorotate from bicarbonate: step 2/3. In terms of biological role, catalyzes the condensation of carbamoyl phosphate and aspartate to form carbamoyl aspartate and inorganic phosphate, the committed step in the de novo pyrimidine nucleotide biosynthesis pathway. The sequence is that of Aspartate carbamoyltransferase catalytic subunit from Listeria monocytogenes serotype 4b (strain F2365).